A 754-amino-acid chain; its full sequence is MTIINHTLGFPRVGLRRELKKAQESYWAGNATREELLAVGRELRARHWEQQKQAGVDLLPVGDFAWYDHVLTTSLLLGNVPARHQNKDGSIDIDTLFRIGRGRAPTGEPAAAAEMTKWFNTNYHYMVPEFVKGQQFKLSWTQLLDEVDEALALGHKIKPVLLGPVTYLWLGKVKGEPFDRLTLLNTILPVYQQVLAELAKRGIDWVQIDEPALVLELPPAWLEAFQPAYDALQGQVKLLLTTYFEGVSDNLATIAALPVQGLHVDLVHGKDDVAELHNRLPADWLLSAGLINGRNVWRADLTEKYAQIKDLVGKRELWVASSCSLLHSPIDLSVETRLDAEVKSWFAFALQKCGELALLRDALNSGDTAAITEWSAPIQARRHSTRVHNAEVEKRLAAITAQDSQRASPYEVRAQAQRQRFNLPKWPTTTIGSFPQTTEIRGLRLDFKKGNLDASHYRTGIAEHIKQAIVEQERLGLDVLVHGEAERNDMVEYFGEHLDGFIFTQNGWVQSYGSRCVKPPVVIGDVSRPQAITVDWAKYAQSLTAKPVKGMLTGPVTILCWSFPREDVSRETIAKQIALALRDEVADLEAAGIGIIQIDEPALREGLPLKRSDWDAYLQWGVEAFRLNAAVAKDDTQIHTHMCYCEFNDIMDSIAALDADVITIETSRSDMELLESFEAFEYPNEIGPGVYDIHSPNVPSVEWIEALLKKAAQRIPVERLWVNPDCGLKTRGWPETRAALANMVQAARNLRQSA.

Residues 17 to 20 and K117 contribute to the 5-methyltetrahydropteroyltri-L-glutamate site; that span reads RELK. L-homocysteine is bound by residues 431–433 and E484; that span reads IGS. Residues 431 to 433 and E484 each bind L-methionine; that span reads IGS. Residues 515–516 and W561 each bind 5-methyltetrahydropteroyltri-L-glutamate; that span reads RC. L-homocysteine is bound at residue D599. D599 contacts L-methionine. E605 is a 5-methyltetrahydropteroyltri-L-glutamate binding site. Positions 641, 643, and 665 each coordinate Zn(2+). H694 (proton donor) is an active-site residue. C726 is a Zn(2+) binding site.

The protein belongs to the vitamin-B12 independent methionine synthase family. Requires Zn(2+) as cofactor.

The enzyme catalyses 5-methyltetrahydropteroyltri-L-glutamate + L-homocysteine = tetrahydropteroyltri-L-glutamate + L-methionine. It participates in amino-acid biosynthesis; L-methionine biosynthesis via de novo pathway; L-methionine from L-homocysteine (MetE route): step 1/1. Catalyzes the transfer of a methyl group from 5-methyltetrahydrofolate to homocysteine resulting in methionine formation. The sequence is that of 5-methyltetrahydropteroyltriglutamate--homocysteine methyltransferase from Klebsiella pneumoniae subsp. pneumoniae (strain ATCC 700721 / MGH 78578).